Here is a 341-residue protein sequence, read N- to C-terminus: Biotin synthase (341 aa).

Residues 40-267 (AEIQVSTLLS…RSMVRLSAGR (228 aa)) enclose the Radical SAM core domain. 3 residues coordinate [4Fe-4S] cluster: Cys55, Cys59, and Cys62. [2Fe-2S] cluster contacts are provided by Cys99, Cys130, Cys190, and Arg262.

Belongs to the radical SAM superfamily. Biotin synthase family. As to quaternary structure, homodimer. It depends on [4Fe-4S] cluster as a cofactor. Requires [2Fe-2S] cluster as cofactor.

It catalyses the reaction (4R,5S)-dethiobiotin + (sulfur carrier)-SH + 2 reduced [2Fe-2S]-[ferredoxin] + 2 S-adenosyl-L-methionine = (sulfur carrier)-H + biotin + 2 5'-deoxyadenosine + 2 L-methionine + 2 oxidized [2Fe-2S]-[ferredoxin]. The protein operates within cofactor biosynthesis; biotin biosynthesis; biotin from 7,8-diaminononanoate: step 2/2. Catalyzes the conversion of dethiobiotin (DTB) to biotin by the insertion of a sulfur atom into dethiobiotin via a radical-based mechanism. This is Biotin synthase from Xylella fastidiosa (strain M12).